Reading from the N-terminus, the 544-residue chain is Major royal jelly protein 3 (544 aa).

A signal peptide spans M1–S20. An N-linked (GlcNAc...) asparagine glycan is attached at N183. The segment at R421 to H544 is disordered. 20 repeat units span residues N424–G428, N429–D433, N434–D438, N439–N443, N444–D448, N449–N453, K454–N458, R459–N463, R464–N468, K469–N473, R474–N478, K479–N483, R484–N488, K489–N493, R494–N498, K499–N503, K504–N508, R509–N513, K514–N518, and R519–N523. Composition is skewed to low complexity over residues N424–Q460, N468–Q510, and N518–N530. A 23 X 5 AA tandem repeats of [NKR]-[RQ]-N-[AGD]-[DNG] region spans residues N424–N523. Residues Q524–N525 form a 21; half-length repeat. 2 tandem repeats follow at residues N526 to N530 and N531 to N535.

The protein belongs to the major royal jelly protein family. Homoligomer; in the absence of RNA, assembles into a higher-order oligomeric form, composed of around 20 monomer units. Found in and secreted from the hypopharyngeal glands of the worker honey bee (at protein level); expression peaks at 12 days post eclosion. Expressed in the brains of worker bees. Expressed in the brains of adult worker bees peaking at 12 days post eclosion (at protein level). Expressed in the spermatheca of adult queen bees (at protein level); Expression levels are higher in mated queens than in virgin queens. Expressed in queen bee ovaries and male drone testes. Expression in the head of forager worker bees is lower than in the heads of nurse worker bees.

It localises to the secreted. Abundant protein component of royal jelly, a substance produced in the hypopharyngeal gland containing proteins, free amino acids, fatty acids, sugars and other nutrients, which is fed to developing larvae by worker nurse bees. Major royal jelly proteins (MRJPs) are high in essential amino acids and probably have a nutritional function in larval food. All larvae are fed some royal jelly (also known as worker jelly) early in their development but it forms the principal source of nutrition for larvae destined to become queen bees. Secreted RNA-binding protein required to concentrate, stabilize and enhance environmental RNA bioavailability in the honey bee royal jelly. Acts as a RNA-aggregating protein: binds 18 nucleotides and longer single- and double-stranded RNA (ssRNA and dsRNA, respectively) in a non-specific manner. RNA-binding drives super-order assembly of oligomers into extracellular ribonucleoprotein granules that concentrate, protect and enhance RNA uptake granules, facilitating RNA transfer among bees. Produced in the spermatheca of adult queen bees, along with other major royal jelly proteins, where it may act as a nutrient supply for sperm stored by mated queens, or be involved in energy metabolism. This Apis mellifera (Honeybee) protein is Major royal jelly protein 3.